The chain runs to 628 residues: MVDSKTPAKTKLLDSSSISNVRVVLRVRPFLPREISDESCDGRSCVSVIGGDGGDTSEVAVYLKDPDSCRNESYQLDAFYGREDDNVKHIFDREVSPLIPGIFHGFNATVLAYGATGSGKTFTMQGIDELPGLMPLTMSTILSMCEKTRSRAEISYYEVYMDRCWDLLEVKDNEIAVWDDKDGQVHLKGLSSVPVKSMSEFQEAYLCGVQRRKVAHTGLNDVSSRSHGVLVISVTSQGLVTGKINLIDLAGNEDNRRTGNEGIRLQESAKINQSLFALSNVVYALNNNLPRVPYRETKLTRILQDSLGGTSRALMVACLNPGEYQESLRTVSLAARSRHISNNVSLNPKVETPKVKIDMEAKLQAWLESKGKMKSAHRMMAIRSPLMGTNQTSISQSSVKKLLCHRSAIAESAKLAGTGQRDAFVTARNLFGVETLAASHLWEPIRNLQLASPTKEDERDTSGEENLLVSEASLRDNTLDVEKKYTELSPLREALSPIDSNAKPNSAHGSSPFLKPMTPKTPFLSTNPEIMQMEGTCQKFNAWSNNLKTSLIKEYIHFLNTANREELRELKGIGQKMAEYIIELRETSPLKSLTDLEKIGFTSRQVHNLFKKATEGVLEKPVSASTTP.

The 321-residue stretch at 20–340 folds into the Kinesin motor domain; that stretch reads NVRVVLRVRP…VSLAARSRHI (321 aa). 114–121 provides a ligand contact to ATP; it reads GATGSGKT. Residues 496–519 form a disordered region; sequence SPIDSNAKPNSAHGSSPFLKPMTP. A compositionally biased stretch (polar residues) spans 498–509; sequence IDSNAKPNSAHG.

The protein belongs to the TRAFAC class myosin-kinesin ATPase superfamily. Kinesin family. KIN-10 subfamily.

This Arabidopsis thaliana (Mouse-ear cress) protein is Kinesin-like protein KIN-10B.